The primary structure comprises 224 residues: Putative N-acetylmannosamine-6-phosphate 2-epimerase (224 aa).

It belongs to the NanE family.

It carries out the reaction an N-acyl-D-glucosamine 6-phosphate = an N-acyl-D-mannosamine 6-phosphate. The protein operates within amino-sugar metabolism; N-acetylneuraminate degradation; D-fructose 6-phosphate from N-acetylneuraminate: step 3/5. In terms of biological role, converts N-acetylmannosamine-6-phosphate (ManNAc-6-P) to N-acetylglucosamine-6-phosphate (GlcNAc-6-P). This chain is Putative N-acetylmannosamine-6-phosphate 2-epimerase, found in Staphylococcus carnosus (strain TM300).